Reading from the N-terminus, the 184-residue chain is MKNIINLVIFSGYWPIAGNFGLNTNLLETNLINLSVVVGLLVYFGKGVLNNLLSNRKQTILSTIKDAEERYNEATDKLNQARERLERAKVKADEIRVNGLSQIEREKKELINAADEDSKRLEDSKNATIRFEEQRAIEQVRQQVSRLALERALEALNKRLNSELHSRVIDYHIGLLRAMESTSD.

Residues Ile4–Thr24 form a helical membrane-spanning segment.

This sequence belongs to the ATPase B chain family. In terms of assembly, F-type ATPases have 2 components, F(1) - the catalytic core - and F(0) - the membrane proton channel. F(1) has five subunits: alpha(3), beta(3), gamma(1), delta(1), epsilon(1). F(0) has four main subunits: a(1), b(1), b'(1) and c(10-14). The alpha and beta chains form an alternating ring which encloses part of the gamma chain. F(1) is attached to F(0) by a central stalk formed by the gamma and epsilon chains, while a peripheral stalk is formed by the delta, b and b' chains.

Its subcellular location is the plastid. The protein localises to the chloroplast thylakoid membrane. F(1)F(0) ATP synthase produces ATP from ADP in the presence of a proton or sodium gradient. F-type ATPases consist of two structural domains, F(1) containing the extramembraneous catalytic core and F(0) containing the membrane proton channel, linked together by a central stalk and a peripheral stalk. During catalysis, ATP synthesis in the catalytic domain of F(1) is coupled via a rotary mechanism of the central stalk subunits to proton translocation. Its function is as follows. Component of the F(0) channel, it forms part of the peripheral stalk, linking F(1) to F(0). The sequence is that of ATP synthase subunit b, chloroplastic from Physcomitrium patens (Spreading-leaved earth moss).